A 103-amino-acid polypeptide reads, in one-letter code: Somatoliberin (103 aa).

The signal sequence occupies residues Met1–Ser19. Propeptides lie at residues Leu20–Arg30 and Gln74–Ala103.

This sequence belongs to the glucagon family.

The protein resides in the secreted. Functionally, GRF is released by the hypothalamus and acts on the adenohypophyse to stimulate the secretion of growth hormone. The sequence is that of Somatoliberin (Ghrh) from Mus musculus (Mouse).